The chain runs to 197 residues: dTTP/UTP pyrophosphatase (197 aa).

Asp70 serves as the catalytic Proton acceptor.

The protein belongs to the Maf family. YhdE subfamily. A divalent metal cation is required as a cofactor.

The protein resides in the cytoplasm. The catalysed reaction is dTTP + H2O = dTMP + diphosphate + H(+). It carries out the reaction UTP + H2O = UMP + diphosphate + H(+). In terms of biological role, nucleoside triphosphate pyrophosphatase that hydrolyzes dTTP and UTP. May have a dual role in cell division arrest and in preventing the incorporation of modified nucleotides into cellular nucleic acids. In Shigella boydii serotype 4 (strain Sb227), this protein is dTTP/UTP pyrophosphatase (yceF2).